Reading from the N-terminus, the 150-residue chain is Monothiol glutaredoxin-S13 (150 aa).

The tract at residues 30–52 (PSSSSSSLSWLTSGSPKPTSISN) is disordered. Low complexity predominate over residues 31-44 (SSSSSSLSWLTSGS). A Glutaredoxin domain is found at 53-149 (KRSSNLVVME…PTLRQAGALW (97 aa)). Cys-73 contacts [2Fe-2S] cluster. Residues 147 to 150 (ALWL) carry the Responsive for interaction with TGA factors motif.

The protein belongs to the glutaredoxin family. CC-type subfamily.

It is found in the cytoplasm. It localises to the nucleus. In terms of biological role, may only reduce GSH-thiol disulfides, but not protein disulfides. This Arabidopsis thaliana (Mouse-ear cress) protein is Monothiol glutaredoxin-S13 (GRXS13).